Here is a 401-residue protein sequence, read N- to C-terminus: 3-oxoadipyl-CoA/3-oxo-5,6-dehydrosuberyl-CoA thiolase (401 aa).

Cys90 acts as the Acyl-thioester intermediate in catalysis. Residues His357 and Cys387 each act as proton acceptor in the active site.

The protein belongs to the thiolase-like superfamily. Thiolase family.

It catalyses the reaction succinyl-CoA + acetyl-CoA = 3-oxoadipyl-CoA + CoA. It carries out the reaction 2,3-didehydroadipoyl-CoA + acetyl-CoA = 3-oxo-5,6-didehydrosuberyl-CoA + CoA. It functions in the pathway aromatic compound metabolism; phenylacetate degradation. Its function is as follows. Catalyzes the thiolytic cleavage of the beta-keto C8 intermediate 3-oxo-5,6-dehydrosuberyl-CoA with CoA to yield the C6 intermediate 2,3-dehydroadipyl-CoA and acetyl-CoA. Besides it catalyzes also the last step of the pathway, in which 3-oxoadipyl-CoA similarly is cleaved to acetyl-CoA and succinyl-CoA. This chain is 3-oxoadipyl-CoA/3-oxo-5,6-dehydrosuberyl-CoA thiolase (paaJ), found in Escherichia coli (strain K12).